A 226-amino-acid chain; its full sequence is 7-cyano-7-deazaguanine synthase (226 aa).

10–20 serves as a coordination point for ATP; that stretch reads LSGGLDSATAA. 4 residues coordinate Zn(2+): Cys-191, Cys-199, Cys-202, and Cys-205.

The protein belongs to the QueC family. It depends on Zn(2+) as a cofactor.

The enzyme catalyses 7-carboxy-7-deazaguanine + NH4(+) + ATP = 7-cyano-7-deazaguanine + ADP + phosphate + H2O + H(+). It functions in the pathway purine metabolism; 7-cyano-7-deazaguanine biosynthesis. Catalyzes the ATP-dependent conversion of 7-carboxy-7-deazaguanine (CDG) to 7-cyano-7-deazaguanine (preQ(0)). This chain is 7-cyano-7-deazaguanine synthase, found in Synechococcus sp. (strain CC9311).